The primary structure comprises 261 residues: 2,3-dihydro-2,3-dihydroxybenzoate dehydrogenase (261 aa).

12–36 (FITGAAQGIGEAVARTLASQGAHIA) contacts NAD(+). Residue serine 144 participates in substrate binding. Catalysis depends on tyrosine 157, which acts as the Proton acceptor.

This sequence belongs to the short-chain dehydrogenases/reductases (SDR) family.

The protein resides in the cytoplasm. The enzyme catalyses (2S,3S)-2,3-dihydroxy-2,3-dihydrobenzoate + NAD(+) = 2,3-dihydroxybenzoate + NADH + H(+). Its pathway is siderophore biosynthesis; bacillibactin biosynthesis. The polypeptide is 2,3-dihydro-2,3-dihydroxybenzoate dehydrogenase (dhbA) (Bacillus subtilis (strain 168)).